The sequence spans 336 residues: Quinolinate synthase (336 aa).

His-25 and Ser-42 together coordinate iminosuccinate. Cys-86 contacts [4Fe-4S] cluster. Iminosuccinate contacts are provided by residues 117–119 and Ser-138; that span reads YIN. Cys-198 contributes to the [4Fe-4S] cluster binding site. Residues 224–226 and Thr-241 contribute to the iminosuccinate site; that span reads HPE. Cys-288 provides a ligand contact to [4Fe-4S] cluster.

This sequence belongs to the quinolinate synthase family. Type 3 subfamily. It depends on [4Fe-4S] cluster as a cofactor.

It localises to the cytoplasm. The catalysed reaction is iminosuccinate + dihydroxyacetone phosphate = quinolinate + phosphate + 2 H2O + H(+). It functions in the pathway cofactor biosynthesis; NAD(+) biosynthesis; quinolinate from iminoaspartate: step 1/1. Catalyzes the condensation of iminoaspartate with dihydroxyacetone phosphate to form quinolinate. The polypeptide is Quinolinate synthase (Helicobacter pylori (strain HPAG1)).